A 157-amino-acid polypeptide reads, in one-letter code: MGFPKVERLLINYKTLDEFKKFKGCGAQELSMLEELQANIIENDSESPFYGIYYGGSLIARMSLYMKRNGGEPFEITGTYLELYKLEVLPNFQKQGFGEMLVNYAKGLQFPIKTIARIHSAGFWDKLNFQPVSVPDGDFYVWHPEVNLNTVTNEESA.

The region spanning 9 to 147 (LLINYKTLDE…DFYVWHPEVN (139 aa)) is the N-acetyltransferase domain.

This is an uncharacterized protein from Bacillus cereus (strain 03BB102).